Here is a 153-residue protein sequence, read N- to C-terminus: Ribosomal RNA large subunit methyltransferase H (153 aa).

Residues L70, G102, and 121 to 126 (LSRMTF) contribute to the S-adenosyl-L-methionine site.

It belongs to the RNA methyltransferase RlmH family. Homodimer.

It is found in the cytoplasm. The enzyme catalyses pseudouridine(1915) in 23S rRNA + S-adenosyl-L-methionine = N(3)-methylpseudouridine(1915) in 23S rRNA + S-adenosyl-L-homocysteine + H(+). In terms of biological role, specifically methylates the pseudouridine at position 1915 (m3Psi1915) in 23S rRNA. The polypeptide is Ribosomal RNA large subunit methyltransferase H (Geobacter sulfurreducens (strain ATCC 51573 / DSM 12127 / PCA)).